The sequence spans 508 residues: Probable glycine dehydrogenase (decarboxylating) subunit 2 (508 aa).

At Lys-277 the chain carries N6-(pyridoxal phosphate)lysine.

The protein belongs to the GcvP family. C-terminal subunit subfamily. In terms of assembly, the glycine cleavage system is composed of four proteins: P, T, L and H. In this organism, the P 'protein' is a heterodimer of two subunits. Requires pyridoxal 5'-phosphate as cofactor.

It carries out the reaction N(6)-[(R)-lipoyl]-L-lysyl-[glycine-cleavage complex H protein] + glycine + H(+) = N(6)-[(R)-S(8)-aminomethyldihydrolipoyl]-L-lysyl-[glycine-cleavage complex H protein] + CO2. The glycine cleavage system catalyzes the degradation of glycine. The P protein binds the alpha-amino group of glycine through its pyridoxal phosphate cofactor; CO(2) is released and the remaining methylamine moiety is then transferred to the lipoamide cofactor of the H protein. In Saccharolobus solfataricus (strain ATCC 35092 / DSM 1617 / JCM 11322 / P2) (Sulfolobus solfataricus), this protein is Probable glycine dehydrogenase (decarboxylating) subunit 2.